The primary structure comprises 546 residues: CTP synthase (546 aa).

Positions Met-1–Leu-267 are amidoligase domain. Ser-13 provides a ligand contact to CTP. Residue Ser-13 coordinates UTP. Ser-14–Ile-19 is an ATP binding site. Tyr-54 is a binding site for L-glutamine. Asp-71 is a binding site for ATP. Mg(2+) is bound by residues Asp-71 and Glu-141. Residues Asp-148–Glu-150, Lys-188–Gln-193, and Lys-224 each bind CTP. Residues Lys-188–Gln-193 and Lys-224 contribute to the UTP site. A Glutamine amidotransferase type-1 domain is found at Glu-292–Thr-534. Gly-354 provides a ligand contact to L-glutamine. Cys-381 functions as the Nucleophile; for glutamine hydrolysis in the catalytic mechanism. Residues Leu-382–Gln-385, Glu-405, and Arg-462 each bind L-glutamine. Catalysis depends on residues His-507 and Glu-509.

Belongs to the CTP synthase family. Homotetramer.

The enzyme catalyses UTP + L-glutamine + ATP + H2O = CTP + L-glutamate + ADP + phosphate + 2 H(+). The catalysed reaction is L-glutamine + H2O = L-glutamate + NH4(+). It catalyses the reaction UTP + NH4(+) + ATP = CTP + ADP + phosphate + 2 H(+). Its pathway is pyrimidine metabolism; CTP biosynthesis via de novo pathway; CTP from UDP: step 2/2. Its activity is regulated as follows. Allosterically activated by GTP, when glutamine is the substrate; GTP has no effect on the reaction when ammonia is the substrate. The allosteric effector GTP functions by stabilizing the protein conformation that binds the tetrahedral intermediate(s) formed during glutamine hydrolysis. Inhibited by the product CTP, via allosteric rather than competitive inhibition. Its function is as follows. Catalyzes the ATP-dependent amination of UTP to CTP with either L-glutamine or ammonia as the source of nitrogen. Regulates intracellular CTP levels through interactions with the four ribonucleotide triphosphates. This is CTP synthase from Synechococcus sp. (strain ATCC 27144 / PCC 6301 / SAUG 1402/1) (Anacystis nidulans).